The sequence spans 434 residues: N-acylneuraminate cytidylyltransferase (434 aa).

Met-1 carries the N-acetylmethionine modification. Residues 1 to 42 are disordered; that stretch reads MDSVEKGAATSVSNPRGRPSRGRPPKLQRNSRGGQGRGVEKP. Residues 15–31 carry the BC1 motif motif; that stretch reads PRGRPSRGRPPKLQRNS. Omega-N-methylarginine occurs at positions 37 and 52. Arg-52, Asn-62, Arg-111, Ser-120, Ser-122, and Gln-143 together coordinate substrate. The BC2 motif motif lies at 200-206; sequence KRPRRQD. Arg-201 is a catalytic residue. Residues 269–276 carry the BC3 motif motif; it reads KEKLKEIK.

Belongs to the CMP-NeuNAc synthase family. Homotetramer; the active enzyme is formed by a dimer of dimers. As to expression, ubiquitously expressed. Expressed in pancreas, kidney, liver, skeletal muscle, lung, placenta, brain, heart, colon, PBL, small intestine, ovary, testis, prostate, thymus and spleen.

It localises to the nucleus. It carries out the reaction an N-acylneuraminate + CTP = a CMP-N-acyl-beta-neuraminate + diphosphate. Its pathway is amino-sugar metabolism; N-acetylneuraminate metabolism. Functionally, catalyzes the activation of N-acetylneuraminic acid (NeuNAc) to cytidine 5'-monophosphate N-acetylneuraminic acid (CMP-NeuNAc), a substrate required for the addition of sialic acid. Has some activity toward NeuNAc, N-glycolylneuraminic acid (Neu5Gc) or 2-keto-3-deoxy-D-glycero-D-galacto-nononic acid (KDN). This is N-acylneuraminate cytidylyltransferase (CMAS) from Homo sapiens (Human).